We begin with the raw amino-acid sequence, 705 residues long: 1,4-alpha-glucan branching enzyme GlgB (705 aa).

Residue D393 is the Nucleophile of the active site. The Proton donor role is filled by E446.

The protein belongs to the glycosyl hydrolase 13 family. GlgB subfamily. As to quaternary structure, monomer.

The enzyme catalyses Transfers a segment of a (1-&gt;4)-alpha-D-glucan chain to a primary hydroxy group in a similar glucan chain.. It functions in the pathway glycan biosynthesis; glycogen biosynthesis. Its function is as follows. Catalyzes the formation of the alpha-1,6-glucosidic linkages in glycogen by scission of a 1,4-alpha-linked oligosaccharide from growing alpha-1,4-glucan chains and the subsequent attachment of the oligosaccharide to the alpha-1,6 position. The protein is 1,4-alpha-glucan branching enzyme GlgB of Picrophilus torridus (strain ATCC 700027 / DSM 9790 / JCM 10055 / NBRC 100828 / KAW 2/3).